The sequence spans 203 residues: ATP-dependent Clp protease proteolytic subunit (203 aa).

The active-site Nucleophile is the Ser107. His132 is an active-site residue.

It belongs to the peptidase S14 family. Fourteen ClpP subunits assemble into 2 heptameric rings which stack back to back to give a disk-like structure with a central cavity, resembling the structure of eukaryotic proteasomes.

It is found in the cytoplasm. The catalysed reaction is Hydrolysis of proteins to small peptides in the presence of ATP and magnesium. alpha-casein is the usual test substrate. In the absence of ATP, only oligopeptides shorter than five residues are hydrolyzed (such as succinyl-Leu-Tyr-|-NHMec, and Leu-Tyr-Leu-|-Tyr-Trp, in which cleavage of the -Tyr-|-Leu- and -Tyr-|-Trp bonds also occurs).. In terms of biological role, cleaves peptides in various proteins in a process that requires ATP hydrolysis. Has a chymotrypsin-like activity. Plays a major role in the degradation of misfolded proteins. The polypeptide is ATP-dependent Clp protease proteolytic subunit (Shewanella loihica (strain ATCC BAA-1088 / PV-4)).